The primary structure comprises 237 residues: Purine nucleoside phosphorylase DeoD-type (237 aa).

H4 serves as a coordination point for a purine D-ribonucleoside. Phosphate-binding positions include G20, R24, R43, and 87–90 (RVGT). Residues 179 to 181 (EME) and 203 to 204 (SD) contribute to the a purine D-ribonucleoside site. Residue D204 is the Proton donor of the active site.

Belongs to the PNP/UDP phosphorylase family. In terms of assembly, homohexamer; trimer of homodimers.

It catalyses the reaction a purine D-ribonucleoside + phosphate = a purine nucleobase + alpha-D-ribose 1-phosphate. It carries out the reaction a purine 2'-deoxy-D-ribonucleoside + phosphate = a purine nucleobase + 2-deoxy-alpha-D-ribose 1-phosphate. Functionally, catalyzes the reversible phosphorolytic breakdown of the N-glycosidic bond in the beta-(deoxy)ribonucleoside molecules, with the formation of the corresponding free purine bases and pentose-1-phosphate. The chain is Purine nucleoside phosphorylase DeoD-type from Streptococcus uberis (strain ATCC BAA-854 / 0140J).